Here is a 96-residue protein sequence, read N- to C-terminus: Large ribosomal subunit protein eL21 (96 aa).

The interval 1–66 (MPSSNGPLEG…FDGQTGTVEG (66 aa)) is disordered.

Belongs to the eukaryotic ribosomal protein eL21 family. As to quaternary structure, part of the 50S ribosomal subunit. Interacts with protein L18 and binds the 5S rRNA. Has been cross-linked to L18.

In terms of biological role, this is one of 5 proteins that mediate the attachment of the 5S rRNA onto the large ribosomal subunit, stabilizing the orientation of adjacent RNA domains. The protein is Large ribosomal subunit protein eL21 (rpl21e) of Haloarcula marismortui (strain ATCC 43049 / DSM 3752 / JCM 8966 / VKM B-1809) (Halobacterium marismortui).